Reading from the N-terminus, the 163-residue chain is MKSRRSRCRRSFTTLVRREEERLARWALELARRGLTGEARRVAEQLFQLAASTRVRPPRRVKRLFCKNCRTPLIPGLTARVRLRSQGGMSYTVVTCLSCGWIHRYPYRKGPRGGAPISPPAAEYGSGGRDSGEREDKGPQGPPRQGGRDNRQGGGHQGGPKGD.

Cysteine 66, cysteine 69, cysteine 96, and cysteine 99 together coordinate Zn(2+). A disordered region spans residues 110 to 163 (GPRGGAPISPPAAEYGSGGRDSGEREDKGPQGPPRQGGRDNRQGGGHQGGPKGD). The segment covering 152–163 (QGGGHQGGPKGD) has biased composition (gly residues).

This sequence belongs to the eukaryotic/archaeal RNase P protein component 4 family. As to quaternary structure, consists of a catalytic RNA component and at least 4-5 protein subunits. Zn(2+) serves as cofactor.

Its subcellular location is the cytoplasm. It catalyses the reaction Endonucleolytic cleavage of RNA, removing 5'-extranucleotides from tRNA precursor.. Its function is as follows. Part of ribonuclease P, a protein complex that generates mature tRNA molecules by cleaving their 5'-ends. The chain is Ribonuclease P protein component 4 from Aeropyrum pernix (strain ATCC 700893 / DSM 11879 / JCM 9820 / NBRC 100138 / K1).